Consider the following 138-residue polypeptide: 16 kDa phloem protein 2 (138 aa).

In terms of domain architecture, C2 spans 1–108 (MGMGMMEVHL…LAEGVRKGWS (108 aa)). Positions 20, 27, 78, 80, and 86 each coordinate Ca(2+).

The cofactor is Ca(2+). In terms of tissue distribution, sieve elements of leaves, stems, roots and flowers.

Functionally, binds to both sense and antisense RNA. Interacts with mesophyll plasmodesmata to mediate its own cell-to-cell transport and potentiate RNA trafficking. This chain is 16 kDa phloem protein 2 (PP16-2), found in Cucurbita maxima (Pumpkin).